The sequence spans 469 residues: Spermatogenesis-associated protein 21 (469 aa).

Disordered regions lie at residues 1–76 and 99–157; these read MDNR…AGTQ and HRRA…MGAP. The span at 49-61 shows a compositional bias: basic and acidic residues; sequence EVRDIGERREPDR. A compositionally biased stretch (low complexity) spans 62-73; the sequence is AQQQPQKPAVAA. The span at 105–132 shows a compositional bias: polar residues; it reads ARSQTAQKSPRTLTPVPTSAPSLPQTPA. A compositionally biased stretch (pro residues) spans 146-157; that stretch reads APGPEPAPMGAP. Residues 198 to 225 are a coiled coil; it reads EPEEQSLQKLYQNREKSEEQLTLKQEEA. One can recognise an EF-hand domain in the interval 255–290; sequence VTLAQVEDALMSADVNGDGRVDFKDFLAVMTDTRRF. Ca(2+) is bound by residues aspartate 268, asparagine 270, aspartate 272, arginine 274, and aspartate 279. Positions 424–469 are disordered; it reads YALDQCTPPGLDPDIRSPFFQSGSQGNREHNSDSRKWLSSVPARTH. Over residues 450–459 the composition is skewed to basic and acidic residues; the sequence is NREHNSDSRK.

Its function is as follows. Involved in the differentiation of haploid spermatids. The sequence is that of Spermatogenesis-associated protein 21 (SPATA21) from Homo sapiens (Human).